Here is an 88-residue protein sequence, read N- to C-terminus: Small ribosomal subunit protein uS17 (88 aa).

The protein belongs to the universal ribosomal protein uS17 family. In terms of assembly, part of the 30S ribosomal subunit.

In terms of biological role, one of the primary rRNA binding proteins, it binds specifically to the 5'-end of 16S ribosomal RNA. This is Small ribosomal subunit protein uS17 from Prochlorococcus marinus (strain MIT 9301).